The following is a 272-amino-acid chain: HMP-PP phosphatase (272 aa).

Residue D8 is the Nucleophile of the active site. Positions 8, 10, and 212 each coordinate Mg(2+).

This sequence belongs to the HAD-like hydrolase superfamily. Cof family. Mg(2+) is required as a cofactor.

The enzyme catalyses 4-amino-2-methyl-5-(diphosphooxymethyl)pyrimidine + H2O = 4-amino-2-methyl-5-(phosphooxymethyl)pyrimidine + phosphate + H(+). Its function is as follows. Catalyzes the hydrolysis of 4-amino-2-methyl-5-hydroxymethylpyrimidine pyrophosphate (HMP-PP) to 4-amino-2-methyl-5-hydroxymethylpyrimidine phosphate (HMP-P). The protein is HMP-PP phosphatase of Escherichia coli O6:H1 (strain CFT073 / ATCC 700928 / UPEC).